The following is a 223-amino-acid chain: Ribose-5-phosphate isomerase A (223 aa).

Substrate contacts are provided by residues 29-32 (TGST), 82-85 (DGAD), and 95-98 (KGGG). The active-site Proton acceptor is the Glu-104. Lys-122 contacts substrate.

This sequence belongs to the ribose 5-phosphate isomerase family. Homodimer.

The enzyme catalyses aldehydo-D-ribose 5-phosphate = D-ribulose 5-phosphate. It functions in the pathway carbohydrate degradation; pentose phosphate pathway; D-ribose 5-phosphate from D-ribulose 5-phosphate (non-oxidative stage): step 1/1. In terms of biological role, catalyzes the reversible conversion of ribose-5-phosphate to ribulose 5-phosphate. This is Ribose-5-phosphate isomerase A from Neisseria meningitidis serogroup C (strain 053442).